We begin with the raw amino-acid sequence, 434 residues long: Enolase (434 aa).

Gln165 contacts (2R)-2-phosphoglycerate. Catalysis depends on Glu207, which acts as the Proton donor. The Mg(2+) site is built by Asp244, Glu291, and Asp318. (2R)-2-phosphoglycerate is bound by residues Lys343, Arg372, Ser373, and Lys394. Lys343 acts as the Proton acceptor in catalysis.

The protein belongs to the enolase family. The cofactor is Mg(2+).

It is found in the cytoplasm. The protein localises to the secreted. Its subcellular location is the cell surface. It catalyses the reaction (2R)-2-phosphoglycerate = phosphoenolpyruvate + H2O. Its pathway is carbohydrate degradation; glycolysis; pyruvate from D-glyceraldehyde 3-phosphate: step 4/5. In terms of biological role, catalyzes the reversible conversion of 2-phosphoglycerate (2-PG) into phosphoenolpyruvate (PEP). It is essential for the degradation of carbohydrates via glycolysis. The polypeptide is Enolase (Staphylococcus epidermidis (strain ATCC 35984 / DSM 28319 / BCRC 17069 / CCUG 31568 / BM 3577 / RP62A)).